A 243-amino-acid polypeptide reads, in one-letter code: Zinc import ATP-binding protein ZnuC (243 aa).

The ABC transporter domain maps to 4-219 (ITVENLSVRY…PEYRALFGTG (216 aa)). An ATP-binding site is contributed by 36 to 43 (GPNGSGKT).

It belongs to the ABC transporter superfamily. Zinc importer (TC 3.A.1.15.5) family. The complex is composed of two ATP-binding proteins (ZnuC), two transmembrane proteins (ZnuB) and a solute-binding protein (ZnuA).

Its subcellular location is the cell inner membrane. The enzyme catalyses Zn(2+)(out) + ATP(in) + H2O(in) = Zn(2+)(in) + ADP(in) + phosphate(in) + H(+)(in). Part of the ABC transporter complex ZnuABC involved in zinc import. Responsible for energy coupling to the transport system. This Jannaschia sp. (strain CCS1) protein is Zinc import ATP-binding protein ZnuC.